Here is a 251-residue protein sequence, read N- to C-terminus: Prolactin-7B1 (251 aa).

A signal peptide spans 1–29 (MHLSLTQQCLWPLQILLVSNLLLWENVAA). N73 is a glycosylation site (N-linked (GlcNAc...) asparagine). 2 cysteine pairs are disulfide-bonded: C100/C216 and C233/C241.

It belongs to the somatotropin/prolactin family.

Its subcellular location is the secreted. In Rattus norvegicus (Rat), this protein is Prolactin-7B1 (Prl7b1).